The chain runs to 495 residues: UDP-glycosyltransferase 73E1 (495 aa).

UDP-alpha-D-glucose contacts are provided by residues serine 299, 355 to 356 (WA), 373 to 381 (HCGWNSTIE), and 395 to 398 (FADQ).

This sequence belongs to the UDP-glycosyltransferase family.

In terms of biological role, may glycosylate diterpenes or flavonols in leaves. The chain is UDP-glycosyltransferase 73E1 from Stevia rebaudiana (Stevia).